A 307-amino-acid polypeptide reads, in one-letter code: Homoserine kinase (307 aa).

92-102 is an ATP binding site; sequence PLARGLGSSAT.

The protein belongs to the GHMP kinase family. Homoserine kinase subfamily.

The protein localises to the cytoplasm. The catalysed reaction is L-homoserine + ATP = O-phospho-L-homoserine + ADP + H(+). Its pathway is amino-acid biosynthesis; L-threonine biosynthesis; L-threonine from L-aspartate: step 4/5. Its function is as follows. Catalyzes the ATP-dependent phosphorylation of L-homoserine to L-homoserine phosphate. The polypeptide is Homoserine kinase (thrB) (Microchaete diplosiphon (Fremyella diplosiphon)).